A 222-amino-acid polypeptide reads, in one-letter code: Chromatin-associated protein SWI6 (222 aa).

The segment covering 1–15 (MPVIKKEELSQKKDL) has biased composition (basic and acidic residues). Disordered regions lie at residues 1-26 (MPVIKKEELSQKKDLESEEEDSGLED) and 77-147 (ETQD…DRQY). Residues 16 to 26 (ESEEEDSGLED) are compositionally biased toward acidic residues. The 60-residue stretch at 28–87 (YEVEKVIKHRGKGKNIEFLVRWKGYGPEYDTWEPTENVASAEEAVAAYWETQDKTATAPR) folds into the Chromo domain.

As to quaternary structure, interacts with DMT5.

It is found in the nucleus. Recognizes and binds histone H3 tails methylated at 'Lys-9', leading to epigenetic repression. Localizes DMT5 to heterochromatin characterized by trimethylation of histone H3 tails at 'Lys-9'. In Cryptococcus neoformans var. grubii serotype A (strain H99 / ATCC 208821 / CBS 10515 / FGSC 9487) (Filobasidiella neoformans var. grubii), this protein is Chromatin-associated protein SWI6.